The following is a 178-amino-acid chain: Large ribosomal subunit protein uL5 (178 aa).

The protein belongs to the universal ribosomal protein uL5 family. In terms of assembly, part of the 50S ribosomal subunit; part of the 5S rRNA/L5/L18/L25 subcomplex. Contacts the 5S rRNA and the P site tRNA. Forms a bridge to the 30S subunit in the 70S ribosome.

Functionally, this is one of the proteins that bind and probably mediate the attachment of the 5S RNA into the large ribosomal subunit, where it forms part of the central protuberance. In the 70S ribosome it contacts protein S13 of the 30S subunit (bridge B1b), connecting the 2 subunits; this bridge is implicated in subunit movement. Contacts the P site tRNA; the 5S rRNA and some of its associated proteins might help stabilize positioning of ribosome-bound tRNAs. This is Large ribosomal subunit protein uL5 from Prochlorococcus marinus (strain MIT 9515).